The sequence spans 395 residues: Formate-dependent phosphoribosylglycinamide formyltransferase (395 aa).

Residues 22-23 (EL) and E82 contribute to the N(1)-(5-phospho-beta-D-ribosyl)glycinamide site. ATP contacts are provided by residues R115, K156, 161 to 166 (SSGKGQ), 196 to 199 (EGFI), and E204. One can recognise an ATP-grasp domain in the interval 120–309 (RLAAETLGLP…EFALHARAIL (190 aa)). Mg(2+) is bound by residues E268 and E280. Residues D287, K356, and 363-364 (RR) contribute to the N(1)-(5-phospho-beta-D-ribosyl)glycinamide site.

Belongs to the PurK/PurT family. In terms of assembly, homodimer.

The catalysed reaction is N(1)-(5-phospho-beta-D-ribosyl)glycinamide + formate + ATP = N(2)-formyl-N(1)-(5-phospho-beta-D-ribosyl)glycinamide + ADP + phosphate + H(+). The protein operates within purine metabolism; IMP biosynthesis via de novo pathway; N(2)-formyl-N(1)-(5-phospho-D-ribosyl)glycinamide from N(1)-(5-phospho-D-ribosyl)glycinamide (formate route): step 1/1. Functionally, involved in the de novo purine biosynthesis. Catalyzes the transfer of formate to 5-phospho-ribosyl-glycinamide (GAR), producing 5-phospho-ribosyl-N-formylglycinamide (FGAR). Formate is provided by PurU via hydrolysis of 10-formyl-tetrahydrofolate. The protein is Formate-dependent phosphoribosylglycinamide formyltransferase of Stenotrophomonas maltophilia (strain K279a).